Reading from the N-terminus, the 169-residue chain is uncharacterized protein (169 aa).

In terms of domain architecture, HTH asnC-type spans 18–79; it reads LDRADVALLN…IVSPKAVGRP (62 aa). Residues 37 to 56 constitute a DNA-binding region (H-T-H motif); it reads SEELADKVGLSPTACQRRLK.

This is an uncharacterized protein from Sinorhizobium fredii (strain NBRC 101917 / NGR234).